We begin with the raw amino-acid sequence, 418 residues long: Gamma-glutamyl phosphate reductase (418 aa).

Belongs to the gamma-glutamyl phosphate reductase family.

The protein resides in the cytoplasm. It carries out the reaction L-glutamate 5-semialdehyde + phosphate + NADP(+) = L-glutamyl 5-phosphate + NADPH + H(+). The protein operates within amino-acid biosynthesis; L-proline biosynthesis; L-glutamate 5-semialdehyde from L-glutamate: step 2/2. Catalyzes the NADPH-dependent reduction of L-glutamate 5-phosphate into L-glutamate 5-semialdehyde and phosphate. The product spontaneously undergoes cyclization to form 1-pyrroline-5-carboxylate. The chain is Gamma-glutamyl phosphate reductase from Desulfatibacillum aliphaticivorans.